The following is a 220-amino-acid chain: Deoxyribose-phosphate aldolase (220 aa).

The active-site Proton donor/acceptor is the aspartate 89. The Schiff-base intermediate with acetaldehyde role is filled by lysine 151. Lysine 180 functions as the Proton donor/acceptor in the catalytic mechanism.

This sequence belongs to the DeoC/FbaB aldolase family. DeoC type 1 subfamily.

The protein resides in the cytoplasm. It catalyses the reaction 2-deoxy-D-ribose 5-phosphate = D-glyceraldehyde 3-phosphate + acetaldehyde. Its pathway is carbohydrate degradation; 2-deoxy-D-ribose 1-phosphate degradation; D-glyceraldehyde 3-phosphate and acetaldehyde from 2-deoxy-alpha-D-ribose 1-phosphate: step 2/2. Its function is as follows. Catalyzes a reversible aldol reaction between acetaldehyde and D-glyceraldehyde 3-phosphate to generate 2-deoxy-D-ribose 5-phosphate. This Streptococcus suis (strain 98HAH33) protein is Deoxyribose-phosphate aldolase.